The sequence spans 388 residues: S-adenosylmethionine synthase (388 aa).

His16 contacts ATP. Asp18 contributes to the Mg(2+) binding site. K(+) is bound at residue Glu44. Residues Glu57 and Gln100 each contribute to the L-methionine site. The tract at residues 100–110 (QSPEIAQGVDR) is flexible loop. ATP is bound by residues 165-167 (DAK), Asp240, 246-247 (RK), Ala263, and Lys267. Asp240 contributes to the L-methionine binding site. Lys271 is an L-methionine binding site.

The protein belongs to the AdoMet synthase family. As to quaternary structure, homotetramer; dimer of dimers. The cofactor is Mg(2+). K(+) serves as cofactor.

It localises to the cytoplasm. The catalysed reaction is L-methionine + ATP + H2O = S-adenosyl-L-methionine + phosphate + diphosphate. Its pathway is amino-acid biosynthesis; S-adenosyl-L-methionine biosynthesis; S-adenosyl-L-methionine from L-methionine: step 1/1. Functionally, catalyzes the formation of S-adenosylmethionine (AdoMet) from methionine and ATP. The overall synthetic reaction is composed of two sequential steps, AdoMet formation and the subsequent tripolyphosphate hydrolysis which occurs prior to release of AdoMet from the enzyme. This is S-adenosylmethionine synthase from Acinetobacter baumannii (strain AYE).